The primary structure comprises 238 residues: MLPFRRILLRRGPLTGRAALFSPAFRTLGGVSREYASKPAKPAARNNTGPGFAMIFALAIIGTVIFNETAKNLDKNKPRNTFTEEEYEHVMQGLKRRVAMFPDGQLDVQFSLQKDSTQLKKLLGDSKLYIDPGQVVENYRSDREDPYEPLLNEVYSKYGPEYLKYLPQGLLVSLLGRYMKAHCRQGDHVVILDFPHSIKDAIKFENEVSSASKLLVPKESLDSDVCKYYQTVQKSQQL.

The N-terminal 35 residues, 1–35 (MLPFRRILLRRGPLTGRAALFSPAFRTLGGVSREY), are a transit peptide targeting the mitochondrion. The helical transmembrane segment at 49 to 65 (GPGFAMIFALAIIGTVI) threads the bilayer.

Belongs to the AIM36 family.

It is found in the mitochondrion membrane. In Zygosaccharomyces rouxii (strain ATCC 2623 / CBS 732 / NBRC 1130 / NCYC 568 / NRRL Y-229), this protein is Altered inheritance of mitochondria protein 36, mitochondrial (AIM36).